The chain runs to 495 residues: L-arabinose isomerase (495 aa).

The Mn(2+) site is built by Glu305, Glu332, His349, and His448.

Belongs to the arabinose isomerase family. It depends on Mn(2+) as a cofactor.

It catalyses the reaction beta-L-arabinopyranose = L-ribulose. The protein operates within carbohydrate degradation; L-arabinose degradation via L-ribulose; D-xylulose 5-phosphate from L-arabinose (bacterial route): step 1/3. Its function is as follows. Catalyzes the conversion of L-arabinose to L-ribulose. The chain is L-arabinose isomerase from Actinobacillus succinogenes (strain ATCC 55618 / DSM 22257 / CCUG 43843 / 130Z).